A 440-amino-acid chain; its full sequence is Xylose isomerase (440 aa).

Catalysis depends on residues H100 and D103. Residues E231, E267, H270, D295, D306, D308, and D338 each coordinate Mg(2+).

Belongs to the xylose isomerase family. In terms of assembly, homotetramer. It depends on Mg(2+) as a cofactor.

It localises to the cytoplasm. It catalyses the reaction alpha-D-xylose = alpha-D-xylulofuranose. The polypeptide is Xylose isomerase (Burkholderia ambifaria (strain MC40-6)).